A 958-amino-acid chain; its full sequence is SLIT and NTRK-like protein 5 (958 aa).

An N-terminal signal peptide occupies residues 1–40; the sequence is MHTCCPPVTLEQDLHRKMHSWMLQTLAFAVTSLVLSCAET. Residues 41 to 664 lie on the Extracellular side of the membrane; sequence IDYYGEICDN…GGGASSVPLS (624 aa). 6 LRR repeats span residues 82–103, 106–127, 130–151, 154–175, 178–199, and 201–222; these read PIYH…EFVN, GASI…AFHG, GLRR…TFLG, NLEY…AFGK, LLQV…LFRF, and PLTH…GLLQ. N103 carries N-linked (GlcNAc...) asparagine glycosylation. One can recognise an LRRCT 1 domain in the interval 235–286; sequence NPWNCSCELISLKDWLDSISYSALVGDVVCETPFRLHGRDLDEVSKQELCPR. A disordered region spans residues 317 to 358; that stretch reads ATSSSAVYKPPLKPPKGTRQPNKPRVRPTSRQPSKDLGYSNY. One can recognise an LRRNT domain in the interval 365–407; it reads QTKSPVPLECPTACSCNLQISDLGLNVNCQERKIESIAELQPK. 6 LRR repeats span residues 410 to 431, 434 to 455, 458 to 479, 482 to 503, 506 to 527, and 529 to 550; these read NPKK…DFLE, GLDL…AFGD, NLRR…LFYG, SLQY…TFDP, NLQL…VFSG, and TLLR…GVLD. One can recognise an LRRCT 2 domain in the interval 563 to 614; sequence NPWDCTCDIVGMKLWVEQLKVGVLVDEVICKAPKKFAETDMRSIKSELLCPD. N644 is a glycosylation site (N-linked (GlcNAc...) asparagine). Residues 665–685 traverse the membrane as a helical segment; the sequence is VLILSLLLVFIMSVFVAAGLF. The Cytoplasmic segment spans residues 686–958; sequence VLVMKRRKKN…LEKQTTFSQF (273 aa). A disordered region spans residues 789 to 844; that stretch reads NHHLQQQQQPPPPPQQPQQQPPPQLQLQPGEEERRESHHLRSPAYSVSTIEPREDL. Residues 797–812 show a composition bias toward pro residues; sequence QPPPPPQQPQQQPPPQ.

The protein belongs to the SLITRK family. In terms of tissue distribution, expressed predominantly in the cerebral cortex of the brain but also at low levels in the spinal cord and medulla.

The protein localises to the membrane. In terms of biological role, suppresses neurite outgrowth. The protein is SLIT and NTRK-like protein 5 (SLITRK5) of Homo sapiens (Human).